A 162-amino-acid polypeptide reads, in one-letter code: Cyclic pyranopterin monophosphate synthase (162 aa).

Substrate-binding positions include 75 to 77 (LCH) and 113 to 114 (ME). The active site involves Asp128.

Belongs to the MoaC family. In terms of assembly, homohexamer; trimer of dimers.

The enzyme catalyses (8S)-3',8-cyclo-7,8-dihydroguanosine 5'-triphosphate = cyclic pyranopterin phosphate + diphosphate. It participates in cofactor biosynthesis; molybdopterin biosynthesis. Catalyzes the conversion of (8S)-3',8-cyclo-7,8-dihydroguanosine 5'-triphosphate to cyclic pyranopterin monophosphate (cPMP). This Xanthobacter autotrophicus (strain ATCC BAA-1158 / Py2) protein is Cyclic pyranopterin monophosphate synthase.